A 427-amino-acid polypeptide reads, in one-letter code: Inward rectifier potassium channel 2 (427 aa).

Topologically, residues 1–81 (MGSVRTNRYS…IFTTCVDIRW (81 aa)) are cytoplasmic. Residues 82-106 (RWMLVIFCLTFILSWLFFGCVFWLI) form a helical membrane-spanning segment. Over 107–128 (ALLHGDLENQENNKPCVSQVSS) the chain is Extracellular. Positions 129–140 (FTAAFLFSIETQ) form an intramembrane region, helical; Pore-forming. The pore-forming intramembrane region spans 141 to 147 (TTIGYGF). The short motif at 142 to 147 (TIGYGF) is the Selectivity filter element. Over 148 to 156 (RCVTDECPI) the chain is Extracellular. A helical transmembrane segment spans residues 157 to 178 (AVFMVVFQSIVGCIIDAFIIGA). The Cytoplasmic segment spans residues 179 to 427 (VMAKMAKPKK…PRPLRRESEI (249 aa)). Residues 181 to 208 (AKMAKPKKRNETLVFSHNAVVAMRDGKL) form a polyphosphoinositide (PIP2)-binding region. The interval 386–427 (EEDEIDTGVPESTSTDTHPDMDHHNQAGVPLEPRPLRRESEI) is disordered. The PDZ-binding motif lies at 425 to 427 (SEI).

Belongs to the inward rectifier-type potassium channel (TC 1.A.2.1) family. KCNJ2 subfamily. In terms of assembly, homotetramer. Homomultimeric and heteromultimeric association with KCNJ4/Kir2.3, resulting in an enhanced G-protein-induced current. Associates, via its PDZ-recognition domain, with a complex containing LIN7A, LIN7B, LIN7C, DLG1, CASK and APBA1. Found in the apical basilar papilla of the inner ear, brain, muscle, cerebellum, heart and liver.

The protein resides in the cell membrane. It is found in the sarcolemma. Its subcellular location is the T-tubule. The enzyme catalyses K(+)(in) = K(+)(out). Activated by phosphatidylinositol 4,5 biphosphate (PtdIns(4,5)P2). Its function is as follows. Inward rectifier potassium channels are characterized by a greater tendency to allow potassium to flow into the cell rather than out of it. Their voltage dependence is regulated by the concentration of extracellular potassium; as external potassium is raised, the voltage range of the channel opening shifts to more positive voltages. The inward rectification is mainly due to the blockage of outward current by internal magnesium. Can be blocked by external barium. Probably participates in establishing action potential waveform and excitability of neuronal and muscle tissues. This chain is Inward rectifier potassium channel 2 (KCNJ2), found in Gallus gallus (Chicken).